A 537-amino-acid chain; its full sequence is Tyrosine-protein kinase Fyn (537 aa).

The N-myristoyl glycine moiety is linked to residue Gly-2. Residues Cys-3 and Cys-6 are each lipidated (S-palmitoyl cysteine). The residue at position 12 (Thr-12) is a Phosphothreonine; by PKC. Positions 82–143 (TGVTLFVALY…PSNYVAPVDS (62 aa)) constitute an SH3 domain. Positions 149–246 (WYFGKLGRKD…GLCCRLVVPC (98 aa)) constitute an SH2 domain. Residues 271–524 (LQLIKRLGNG…YLQAFLEDYF (254 aa)) form the Protein kinase domain. ATP contacts are provided by residues 277-285 (LGNGQFGEV) and Lys-299. Asp-390 serves as the catalytic Proton acceptor. Tyr-420 carries the post-translational modification Phosphotyrosine; by autocatalysis. A Phosphotyrosine modification is found at Tyr-531.

The protein belongs to the protein kinase superfamily. Tyr protein kinase family. SRC subfamily. Associates through its SH3 domain, to the p85 subunit of phosphatidylinositol 3-kinase. Mn(2+) serves as cofactor.

The enzyme catalyses L-tyrosyl-[protein] + ATP = O-phospho-L-tyrosyl-[protein] + ADP + H(+). Inhibited by phosphorylation of Tyr-531 by leukocyte common antigen and activated by dephosphorylation of this site. In terms of biological role, tyrosine-protein kinase implicated in the control of cell growth. Plays a role in the regulation of intracellular calcium levels. Required in brain development and mature brain function with important roles in the regulation of axon growth, axon guidance, and neurite extension. The polypeptide is Tyrosine-protein kinase Fyn (fyn) (Xiphophorus hellerii (Green swordtail)).